The primary structure comprises 211 residues: NADH-quinone oxidoreductase subunit I (211 aa).

The tract at residues 1 to 27 is disordered; it reads MANTDRPALPHKRAVPPSRADSGPRRR. 2 4Fe-4S ferredoxin-type domains span residues 71 to 101 and 117 to 146; these read LNRY…VEGA and RVYQ…MTYD. [4Fe-4S] cluster-binding residues include cysteine 81, cysteine 84, cysteine 87, cysteine 91, cysteine 126, cysteine 129, cysteine 132, and cysteine 136.

The protein belongs to the complex I 23 kDa subunit family. NDH-1 is composed of 14 different subunits. Subunits NuoA, H, J, K, L, M, N constitute the membrane sector of the complex. [4Fe-4S] cluster is required as a cofactor.

It localises to the cell membrane. It carries out the reaction a quinone + NADH + 5 H(+)(in) = a quinol + NAD(+) + 4 H(+)(out). Functionally, NDH-1 shuttles electrons from NADH, via FMN and iron-sulfur (Fe-S) centers, to quinones in the respiratory chain. The immediate electron acceptor for the enzyme in this species is believed to be menaquinone. Couples the redox reaction to proton translocation (for every two electrons transferred, four hydrogen ions are translocated across the cytoplasmic membrane), and thus conserves the redox energy in a proton gradient. The sequence is that of NADH-quinone oxidoreductase subunit I from Mycobacterium bovis (strain ATCC BAA-935 / AF2122/97).